A 1141-amino-acid polypeptide reads, in one-letter code: DNA-directed RNA polymerase subunit beta (1141 aa).

It belongs to the RNA polymerase beta chain family. The RNAP catalytic core consists of 2 alpha, 1 beta, 1 beta' and 1 omega subunit. When a sigma factor is associated with the core the holoenzyme is formed, which can initiate transcription.

The enzyme catalyses RNA(n) + a ribonucleoside 5'-triphosphate = RNA(n+1) + diphosphate. DNA-dependent RNA polymerase catalyzes the transcription of DNA into RNA using the four ribonucleoside triphosphates as substrates. The sequence is that of DNA-directed RNA polymerase subunit beta from Frankia casuarinae (strain DSM 45818 / CECT 9043 / HFP020203 / CcI3).